We begin with the raw amino-acid sequence, 545 residues long: ATP synthase subunit alpha (545 aa).

An ATP-binding site is contributed by 173–180 (GDRQTGKS).

This sequence belongs to the ATPase alpha/beta chains family. In terms of assembly, F-type ATPases have 2 components, CF(1) - the catalytic core - and CF(0) - the membrane proton channel. CF(1) has five subunits: alpha(3), beta(3), gamma(1), delta(1), epsilon(1). CF(0) has three main subunits: a(1), b(2) and c(9-12). The alpha and beta chains form an alternating ring which encloses part of the gamma chain. CF(1) is attached to CF(0) by a central stalk formed by the gamma and epsilon chains, while a peripheral stalk is formed by the delta and b chains.

It is found in the cell membrane. The catalysed reaction is ATP + H2O + 4 H(+)(in) = ADP + phosphate + 5 H(+)(out). In terms of biological role, produces ATP from ADP in the presence of a proton gradient across the membrane. The alpha chain is a regulatory subunit. The sequence is that of ATP synthase subunit alpha from Arthrobacter sp. (strain FB24).